We begin with the raw amino-acid sequence, 80 residues long: Exodeoxyribonuclease 7 small subunit (80 aa).

Belongs to the XseB family. In terms of assembly, heterooligomer composed of large and small subunits.

The protein localises to the cytoplasm. The catalysed reaction is Exonucleolytic cleavage in either 5'- to 3'- or 3'- to 5'-direction to yield nucleoside 5'-phosphates.. In terms of biological role, bidirectionally degrades single-stranded DNA into large acid-insoluble oligonucleotides, which are then degraded further into small acid-soluble oligonucleotides. In Citrobacter koseri (strain ATCC BAA-895 / CDC 4225-83 / SGSC4696), this protein is Exodeoxyribonuclease 7 small subunit.